A 299-amino-acid chain; its full sequence is Plasmodesmata-located protein 5 (299 aa).

An N-terminal signal peptide occupies residues 1-25 (MIKTKTTSLLCFLLTAVILMNPSSS). The Extracellular portion of the chain corresponds to 26–264 (SPTDNYIYAV…NKDDNGVGKT (239 aa)). 2 consecutive Gnk2-homologous domains span residues 29–135 (DNYI…NKSF) and 137–237 (GVQD…VGGS). 6 disulfide bridges follow: cysteine 36–cysteine 113, cysteine 89–cysteine 98, cysteine 101–cysteine 126, cysteine 148–cysteine 215, cysteine 191–cysteine 200, and cysteine 203–cysteine 228. A helical transmembrane segment spans residues 265 to 285 (LAIIIGIVTLIILLVVFLAFV). The tract at residues 265-285 (LAIIIGIVTLIILLVVFLAFV) is necessary and sufficient for plasmodesmal targeting. The Cytoplasmic portion of the chain corresponds to 286 to 299 (GKCCRKLQDEKWCK).

Belongs to the cysteine-rich repeat secretory protein family. Plasmodesmata-located proteins (PDLD) subfamily. In terms of assembly, monomer. Interacts with PDLP1. As to quaternary structure, (Microbial infection) Interacts with Grapevine fanleaf virus (GFLV) 2B-MP. Highly expressed in inflorescence nodes and rosette senescent leaves. Mostly expressed in cell wall junctions between leaf epidermal and mesophyl cells, and to a lesser extent at the cross walls between epidermal or cortex cells within the hypocotyl (at protein level). Low vascular expression in seedling and mature leaf, but high expression in senescing leaves (at protein level).

It is found in the cell membrane. Its subcellular location is the cell junction. The protein localises to the plasmodesma. Modulates cell-to-cell trafficking. Has a positive role in innate immunity. Required for systemic acquired resistance (SAR) which is mediated by the signaling molecules azelaic acid (AzA), glycerol-3-phosphate (G3P), and salicylic acid (SA). Negative regulator of plasmodesmata permeability triggered by SA during immune responses, through regulation of callose deposition. Delays the trafficking of Tobacco Mosaic Virus (TMV) movement protein (MP). Required for symplastic signal transport. The polypeptide is Plasmodesmata-located protein 5 (Arabidopsis thaliana (Mouse-ear cress)).